The primary structure comprises 440 residues: Ribosomal protein uS12 methylthiotransferase RimO (440 aa).

The region spanning 7–117 (PKISFVSLGC…VLDAVHRALP (111 aa)) is the MTTase N-terminal domain. [4Fe-4S] cluster is bound by residues cysteine 16, cysteine 52, cysteine 81, cysteine 148, cysteine 152, and cysteine 155. The 237-residue stretch at 134–370 (LTPRHYAYLK…MARQQKISAQ (237 aa)) folds into the Radical SAM core domain. The TRAM domain maps to 373–439 (KRKVGTRQQV…EYDLHGSVAG (67 aa)).

Belongs to the methylthiotransferase family. RimO subfamily. Requires [4Fe-4S] cluster as cofactor.

The protein resides in the cytoplasm. It carries out the reaction L-aspartate(89)-[ribosomal protein uS12]-hydrogen + (sulfur carrier)-SH + AH2 + 2 S-adenosyl-L-methionine = 3-methylsulfanyl-L-aspartate(89)-[ribosomal protein uS12]-hydrogen + (sulfur carrier)-H + 5'-deoxyadenosine + L-methionine + A + S-adenosyl-L-homocysteine + 2 H(+). In terms of biological role, catalyzes the methylthiolation of an aspartic acid residue of ribosomal protein uS12. This Afipia carboxidovorans (strain ATCC 49405 / DSM 1227 / KCTC 32145 / OM5) (Oligotropha carboxidovorans) protein is Ribosomal protein uS12 methylthiotransferase RimO.